The chain runs to 191 residues: MIRITDAAQEHFAKLLSNQEPGTQIRVFVINPGTPNAECGVSYCPPDAVEATDTELKFDKISAYVDELSAPYLQDAEIDFVTDKLGSQLTLKAPNAKMRKVSDEAPLIERVEYLLQSQINPQLAGHGGQVTLMEITDDMLAILQFGGGCNGCSMVDYTLKEGIEKELLEKFPELKGVRDLTEHQRGEHSYY.

[4Fe-4S] cluster-binding residues include Cys-149 and Cys-152.

The protein belongs to the NfuA family. As to quaternary structure, homodimer. It depends on [4Fe-4S] cluster as a cofactor.

Its function is as follows. Involved in iron-sulfur cluster biogenesis. Binds a 4Fe-4S cluster, can transfer this cluster to apoproteins, and thereby intervenes in the maturation of Fe/S proteins. Could also act as a scaffold/chaperone for damaged Fe/S proteins. The sequence is that of Fe/S biogenesis protein NfuA from Sodalis glossinidius (strain morsitans).